Reading from the N-terminus, the 567-residue chain is Urease subunit alpha (567 aa).

The Urease domain occupies 129-567 (GGVDSHIHFI…LPLAQRYFLF (439 aa)). Residues histidine 134, histidine 136, and lysine 217 each coordinate Ni(2+). Position 217 is an N6-carboxylysine (lysine 217). Histidine 219 contributes to the substrate binding site. Ni(2+) contacts are provided by histidine 246 and histidine 272. Residue histidine 320 is the Proton donor of the active site. Aspartate 360 is a Ni(2+) binding site.

This sequence belongs to the metallo-dependent hydrolases superfamily. Urease alpha subunit family. Heterotrimer of UreA (gamma), UreB (beta) and UreC (alpha) subunits. Three heterotrimers associate to form the active enzyme. Requires Ni cation as cofactor. Post-translationally, carboxylation allows a single lysine to coordinate two nickel ions.

Its subcellular location is the cytoplasm. The catalysed reaction is urea + 2 H2O + H(+) = hydrogencarbonate + 2 NH4(+). Its pathway is nitrogen metabolism; urea degradation; CO(2) and NH(3) from urea (urease route): step 1/1. The chain is Urease subunit alpha from Pseudomonas putida (strain ATCC 700007 / DSM 6899 / JCM 31910 / BCRC 17059 / LMG 24140 / F1).